The primary structure comprises 85 residues: Beta-insect depressant toxin LqhIT2 (85 aa).

A signal peptide spans 1–21; the sequence is MKLLLLLIVSASMLIESLVNA. An LCN-type CS-alpha/beta domain is found at 22 to 82; it reads DGYIKRRDGC…TWKSETNTCG (61 aa). Disulfide bonds link Cys31–Cys81, Cys35–Cys56, Cys42–Cys63, and Cys46–Cys65. Gly82 bears the Glycine amide mark.

Belongs to the long (4 C-C) scorpion toxin superfamily. Sodium channel inhibitor family. Beta subfamily. In terms of tissue distribution, expressed by the venom gland.

The protein resides in the secreted. Its function is as follows. Depressant insect beta-toxins cause a transient contraction paralysis followed by a slow flaccid paralysis. They bind voltage-independently at site-4 of sodium channels (Nav) and shift the voltage of activation toward more negative potentials thereby affecting sodium channel activation and promoting spontaneous and repetitive firing. This toxin is active only on insects. This Leiurus hebraeus (Hebrew deathstalker scorpion) protein is Beta-insect depressant toxin LqhIT2.